A 126-amino-acid polypeptide reads, in one-letter code: Glycine cleavage system H protein (126 aa).

Residues 22-104 (VATVGITEYA…YEKAWMVKIE (83 aa)) form the Lipoyl-binding domain. An N6-lipoyllysine modification is found at lysine 63.

Belongs to the GcvH family. As to quaternary structure, the glycine cleavage system is composed of four proteins: P, T, L and H. (R)-lipoate is required as a cofactor.

The glycine cleavage system catalyzes the degradation of glycine. The H protein shuttles the methylamine group of glycine from the P protein to the T protein. Functionally, is also involved in protein lipoylation via its role as an octanoyl/lipoyl carrier protein intermediate. In Staphylococcus epidermidis (strain ATCC 12228 / FDA PCI 1200), this protein is Glycine cleavage system H protein.